Consider the following 1191-residue polypeptide: Major DNA-binding protein (1191 aa).

A Required for filament formation motif is present at residues 820-821 (FW). 2 disordered regions span residues 1122–1146 (TAAG…AADE) and 1168–1191 (AGLI…RSRL). Residues 1127-1142 (AAGGGGSATEGGGGGA) show a composition bias toward gly residues. Positions 1173–1191 (GDDVRGDDEFELPSKRSRL) are required for nuclear localization.

The protein belongs to the herpesviridae major DNA-binding protein family. As to quaternary structure, homooligomers. Forms double-helical filaments necessary for the formation of replication compartments within the host nucleus. Interacts with the origin-binding protein. Interacts with the helicase primase complex; this interaction stimulates primer synthesis activity of the helicase-primase complex. Interacts with the DNA polymerase. Interacts with the alkaline exonuclease; this interaction increases its nuclease processivity.

Its subcellular location is the host nucleus. Functionally, single-stranded DNA-binding protein required for DNA replication. Plays several crucial roles in viral infection. Participates in the opening of the viral DNA origin to initiate replication by interacting with the origin-binding protein. May disrupt loops, hairpins and other secondary structures present on ssDNA to reduce and eliminate pausing of viral DNA polymerase at specific sites during elongation. Promotes viral DNA recombination by performing strand-transfer, characterized by the ability to transfer a DNA strand from a linear duplex to a complementary single-stranded DNA circle. Can also catalyze the renaturation of complementary single strands. Additionally, reorganizes the host cell nucleus, leading to the formation of prereplicative sites and replication compartments. This process is driven by the protein which can form double-helical filaments in the absence of DNA. This is Major DNA-binding protein from Mus musculus (Mouse).